An 859-amino-acid polypeptide reads, in one-letter code: DNA mismatch repair protein MutS (859 aa).

614-621 (GPNMGGKS) contributes to the ATP binding site.

Belongs to the DNA mismatch repair MutS family.

This protein is involved in the repair of mismatches in DNA. It is possible that it carries out the mismatch recognition step. This protein has a weak ATPase activity. The protein is DNA mismatch repair protein MutS of Histophilus somni (strain 2336) (Haemophilus somnus).